Here is a 292-residue protein sequence, read N- to C-terminus: 4-hydroxy-tetrahydrodipicolinate synthase (292 aa).

Threonine 45 is a binding site for pyruvate. Tyrosine 133 (proton donor/acceptor) is an active-site residue. The active-site Schiff-base intermediate with substrate is lysine 161. Isoleucine 203 contacts pyruvate.

It belongs to the DapA family. In terms of assembly, homodimer.

Its subcellular location is the cytoplasm. The enzyme catalyses L-aspartate 4-semialdehyde + pyruvate = (2S,4S)-4-hydroxy-2,3,4,5-tetrahydrodipicolinate + H2O + H(+). Its pathway is amino-acid biosynthesis; L-lysine biosynthesis via DAP pathway; (S)-tetrahydrodipicolinate from L-aspartate: step 3/4. Functionally, catalyzes the condensation of (S)-aspartate-beta-semialdehyde [(S)-ASA] and pyruvate to 4-hydroxy-tetrahydrodipicolinate (HTPA). In Pseudomonas syringae pv. syringae (strain B728a), this protein is 4-hydroxy-tetrahydrodipicolinate synthase.